A 61-amino-acid chain; its full sequence is Small ribosomal subunit protein uS14 (61 aa).

Cys-24, Cys-27, Cys-40, and Cys-43 together coordinate Zn(2+).

Belongs to the universal ribosomal protein uS14 family. Zinc-binding uS14 subfamily. In terms of assembly, part of the 30S ribosomal subunit. Contacts proteins S3 and S10. Zn(2+) serves as cofactor.

In terms of biological role, binds 16S rRNA, required for the assembly of 30S particles and may also be responsible for determining the conformation of the 16S rRNA at the A site. This chain is Small ribosomal subunit protein uS14, found in Desulfovibrio desulfuricans (strain ATCC 27774 / DSM 6949 / MB).